A 106-amino-acid chain; its full sequence is ATP-dependent Clp protease adapter protein ClpS (106 aa).

The protein belongs to the ClpS family. Binds to the N-terminal domain of the chaperone ClpA.

Its function is as follows. Involved in the modulation of the specificity of the ClpAP-mediated ATP-dependent protein degradation. The polypeptide is ATP-dependent Clp protease adapter protein ClpS (Vibrio atlanticus (strain LGP32) (Vibrio splendidus (strain Mel32))).